A 694-amino-acid chain; its full sequence is Cyclic nucleotide-gated channel beta-3 (694 aa).

Residues 1–210 (MLKSLTVKFN…SIDSYTDRVY (210 aa)) lie on the Cytoplasmic side of the membrane. 2 disordered regions span residues 24 to 82 (CPNL…DPEC) and 146 to 177 (ENFPEVEASSQTAMSTNISPKQENNSKLKEHQ). Polar residues-rich tracts occupy residues 26–40 (NLSSLSQPTIAQGDN) and 153–168 (ASSQTAMSTNISPKQE). The helical transmembrane segment at 211–234 (LLWLLLVTIAYNWNCWLLPVRLVF) threads the bilayer. Residues 235 to 241 (PCQTPDN) lie on the Extracellular side of the membrane. Residues 242 to 262 (KNYWIITDIVCDIIYLCDILL) form a helical membrane-spanning segment. Residues 263–291 (IQPRLQFVRGGEIIVDSNELKRNYRSSTK) are Cytoplasmic-facing. Residues 292 to 309 (FRMDVASLLPFEVLYIFF) traverse the membrane as a helical segment. Residues 310–312 (GVN) are Extracellular-facing. The chain crosses the membrane as a helical span at residues 313–327 (PIFRANRILKYTSFF). Residues 328–340 (EFNHHLESIMDKA) are Cytoplasmic-facing. Positions 340–439 (AYVYRVIRTT…IGQMRDVIGA (100 aa)) are ion conduction pathway. A helical transmembrane segment spans residues 341–363 (YVYRVIRTTGYLLFLLHINACVY). The Extracellular portion of the chain corresponds to 364 to 385 (YWASDYEGIGSTKWVYNGEGNK). 2 helical membrane-spanning segments follow: residues 386-412 (YLRCFYWAVRTLITIGGLPEPQTSFEI) and 413-437 (VFQFLNFFSGVFVFSSLIGQMRDVI). A selectivity filter region spans residues 399 to 402 (TIGG). Topologically, residues 438–694 (GAATANQNYF…KGKRKTTTQK (257 aa)) are cytoplasmic. The segment at 442-518 (ANQNYFQACM…SIIDKVELFK (77 aa)) is C-linker. The cyclic nucleotide-binding domain stretch occupies residues 522-638 (TQMIYDLLLR…LLMKKAKILL (117 aa)). 4 residues coordinate 3',5'-cyclic GMP: G583, E584, R596, and T597.

This sequence belongs to the cyclic nucleotide-gated cation channel (TC 1.A.1.5) family. CNGB3 subfamily. As to quaternary structure, forms heterotetrameric channels composed of CNGA3 and CNGB3 subunits with 3:1 stoichiometry. In terms of tissue distribution, small subset of retinal photoreceptor cells and testis.

The protein localises to the cell membrane. The enzyme catalyses Ca(2+)(in) = Ca(2+)(out). It carries out the reaction Na(+)(in) = Na(+)(out). It catalyses the reaction K(+)(in) = K(+)(out). The catalysed reaction is NH4(+)(in) = NH4(+)(out). The enzyme catalyses Rb(+)(in) = Rb(+)(out). It carries out the reaction Li(+)(in) = Li(+)(out). It catalyses the reaction Cs(+)(in) = Cs(+)(out). Functionally, pore-forming subunit of the cone cyclic nucleotide-gated channel. Mediates cone photoresponses at bright light converting transient changes in intracellular cGMP levels into electrical signals. In the dark, cGMP levels are high and keep the channel open enabling a steady inward current carried by Na(+) and Ca(2+) ions that leads to membrane depolarization and neurotransmitter release from synaptic terminals. Upon photon absorption cGMP levels decline leading to channel closure and membrane hyperpolarization that ultimately slows neurotransmitter release and signals the presence of light, the end point of the phototransduction cascade. Conducts cGMP- and cAMP-gated ion currents, with permeability for monovalent and divalent cations. The protein is Cyclic nucleotide-gated channel beta-3 of Mus musculus (Mouse).